Consider the following 722-residue polypeptide: Glycine--tRNA ligase beta subunit (722 aa).

Belongs to the class-II aminoacyl-tRNA synthetase family. Tetramer of two alpha and two beta subunits.

It localises to the cytoplasm. It catalyses the reaction tRNA(Gly) + glycine + ATP = glycyl-tRNA(Gly) + AMP + diphosphate. The protein is Glycine--tRNA ligase beta subunit (glyS) of Xylella fastidiosa (strain 9a5c).